The chain runs to 313 residues: Pyrimidine-specific ribonucleoside hydrolase RihB (313 aa).

E11 (proton acceptor) is an active-site residue. Residues E11, D16, and V124 each coordinate Ca(2+). Residues Q227 and H239 each contribute to the substrate site. D240 lines the Ca(2+) pocket.

This sequence belongs to the IUNH family. RihB subfamily. Homotetramer. Ca(2+) is required as a cofactor.

It catalyses the reaction a pyrimidine ribonucleoside + H2O = a pyrimidine nucleobase + D-ribose. Its function is as follows. Hydrolyzes cytidine or uridine to ribose and cytosine or uracil, respectively. Has a clear preference for cytidine over uridine. Strictly specific for ribonucleosides. The chain is Pyrimidine-specific ribonucleoside hydrolase RihB from Shigella flexneri serotype 5b (strain 8401).